The chain runs to 364 residues: UDP-N-acetylglucosamine--N-acetylmuramyl-(pentapeptide) pyrophosphoryl-undecaprenol N-acetylglucosamine transferase 1 (364 aa).

Residues 10–12 (TGG), asparagine 124, serine 195, isoleucine 250, and glutamine 295 contribute to the UDP-N-acetyl-alpha-D-glucosamine site.

Belongs to the glycosyltransferase 28 family. MurG subfamily.

The protein resides in the cell membrane. The enzyme catalyses di-trans,octa-cis-undecaprenyl diphospho-N-acetyl-alpha-D-muramoyl-L-alanyl-D-glutamyl-meso-2,6-diaminopimeloyl-D-alanyl-D-alanine + UDP-N-acetyl-alpha-D-glucosamine = di-trans,octa-cis-undecaprenyl diphospho-[N-acetyl-alpha-D-glucosaminyl-(1-&gt;4)]-N-acetyl-alpha-D-muramoyl-L-alanyl-D-glutamyl-meso-2,6-diaminopimeloyl-D-alanyl-D-alanine + UDP + H(+). Its pathway is cell wall biogenesis; peptidoglycan biosynthesis. Cell wall formation. Catalyzes the transfer of a GlcNAc subunit on undecaprenyl-pyrophosphoryl-MurNAc-pentapeptide (lipid intermediate I) to form undecaprenyl-pyrophosphoryl-MurNAc-(pentapeptide)GlcNAc (lipid intermediate II). This Bacillus anthracis protein is UDP-N-acetylglucosamine--N-acetylmuramyl-(pentapeptide) pyrophosphoryl-undecaprenol N-acetylglucosamine transferase 1.